Consider the following 331-residue polypeptide: UDP-GalNAc:beta-1,3-N-acetylgalactosaminyltransferase 1 (331 aa).

Topologically, residues 1 to 20 are cytoplasmic; that stretch reads MAPALPITLPSKMSLRSLKW. The helical; Signal-anchor for type II membrane protein transmembrane segment at 21–43 threads the bilayer; it reads SLLLLSLLSFLVMWYLSLPHYNV. The Lumenal portion of the chain corresponds to 44-331; that stretch reads IERVNWMYFY…VMLRNTTCHY (288 aa). 5 N-linked (GlcNAc...) asparagine glycosylation sites follow: N72, N154, N198, N212, and N326.

It belongs to the glycosyltransferase 31 family. Mg(2+) is required as a cofactor.

It localises to the golgi apparatus membrane. The enzyme catalyses a globoside Gb3Cer (d18:1(4E)) + UDP-N-acetyl-alpha-D-galactosamine = a globoside Gb4Cer (d18:1(4E)) + UDP + H(+). It participates in protein modification; protein glycosylation. In terms of biological role, transfers N-acetylgalactosamine onto globotriaosylceramide. Plays a critical role in preimplantation stage embryonic development. The polypeptide is UDP-GalNAc:beta-1,3-N-acetylgalactosaminyltransferase 1 (B3GALNT1) (Sus scrofa (Pig)).